Here is a 423-residue protein sequence, read N- to C-terminus: uncharacterized protein (423 aa).

A disordered region spans residues 383–423 (ARGTTGGGGTRSGTSTDGQEDGRKPPVVVIREQPPPGNPPR).

Belongs to the mycobacterial PPE family.

This is an uncharacterized protein from Mycobacterium tuberculosis (strain CDC 1551 / Oshkosh).